Here is a 335-residue protein sequence, read N- to C-terminus: Probable cytosolic iron-sulfur protein assembly protein Ciao1 (335 aa).

7 WD repeats span residues 12-51, 57-96, 101-140, 146-185, 192-231, 250-289, and 301-335; these read GHKG…WGTK, GHKR…FECN, GHEN…EFEC, PHTQ…NDWD, SHTS…NTAG, QHSR…KPDE, and AHDQ…KVSE.

This sequence belongs to the WD repeat CIA1 family.

Functionally, essential component of the cytosolic iron-sulfur (Fe/S) protein assembly machinery. Required for the maturation of extramitochondrial Fe/S proteins. In Drosophila sechellia (Fruit fly), this protein is Probable cytosolic iron-sulfur protein assembly protein Ciao1.